A 442-amino-acid polypeptide reads, in one-letter code: Citrate synthase (442 aa).

Residues H274, H320, and D375 contribute to the active site.

This sequence belongs to the citrate synthase family.

It carries out the reaction oxaloacetate + acetyl-CoA + H2O = citrate + CoA + H(+). Its pathway is carbohydrate metabolism; tricarboxylic acid cycle; isocitrate from oxaloacetate: step 1/2. Catalyzes both citrate generation and citrate cleavage. Part of a reversible tricarboxylic acid (TCA) cycle that can fix carbon dioxide autotrophically and may represent an ancestral mode of the conventional reductive TCA (rTCA) cycle. The direction is controlled by the available carbon source(s). This Thermosulfidibacter takaii (strain DSM 17441 / JCM 13301 / NBRC 103674 / ABI70S6) protein is Citrate synthase.